Consider the following 242-residue polypeptide: Probable transcriptional regulatory protein XOO1543 (242 aa).

It belongs to the TACO1 family.

The protein localises to the cytoplasm. In Xanthomonas oryzae pv. oryzae (strain MAFF 311018), this protein is Probable transcriptional regulatory protein XOO1543.